The following is a 1444-amino-acid chain: DNA polymerase III PolC-type (1444 aa).

Positions 196–218 (EAVQVMQKRQAEGQNGNSSAAPL) are disordered. The segment covering 207–216 (EGQNGNSSAA) has biased composition (polar residues). An Exonuclease domain is found at 428–584 (YCVFDVETTG…FDAEATAYLA (157 aa)).

This sequence belongs to the DNA polymerase type-C family. PolC subfamily.

The protein localises to the cytoplasm. It carries out the reaction DNA(n) + a 2'-deoxyribonucleoside 5'-triphosphate = DNA(n+1) + diphosphate. Required for replicative DNA synthesis. This DNA polymerase also exhibits 3' to 5' exonuclease activity. The sequence is that of DNA polymerase III PolC-type from Listeria welshimeri serovar 6b (strain ATCC 35897 / DSM 20650 / CCUG 15529 / CIP 8149 / NCTC 11857 / SLCC 5334 / V8).